A 726-amino-acid polypeptide reads, in one-letter code: uncharacterized protein (726 aa).

One can recognise a Thioredoxin domain in the interval 10–135 (MRISWVVAFI…LLDFVETHLN (126 aa)). Disordered regions lie at residues 133–153 (HLNPDTDPDIPSDEDVLTDED) and 227–280 (VTSV…NPTG). Residues 138–153 (TDPDIPSDEDVLTDED) show a composition bias toward acidic residues. The chain crosses the membrane as a helical span at residues 675–695 (IRVLYMVLGIVTVGILVWYFS). Phosphoserine is present on Ser708.

It localises to the membrane. This is an uncharacterized protein from Schizosaccharomyces pombe (strain 972 / ATCC 24843) (Fission yeast).